The primary structure comprises 521 residues: Beta-glucosidase 6 (521 aa).

An N-terminal signal peptide occupies residues 1–38 (MGRIKSSSGRCSTARLEAVAVLVVVFGVASSSLRGCIA). A beta-D-glucoside is bound by residues Gln64, His165, and 210-211 (NE). Glu211 (proton donor) is an active-site residue. A disulfide bridge links Cys230 with Cys238. The N-linked (GlcNAc...) asparagine glycan is linked to Asn291. Tyr354 is a binding site for a beta-D-glucoside. N-linked (GlcNAc...) asparagine glycosylation is found at Asn362 and Asn372. A beta-D-glucoside contacts are provided by residues Glu427, Trp477, 484–485 (EW), and Phe493. Catalysis depends on Glu427, which acts as the Nucleophile.

The protein belongs to the glycosyl hydrolase 1 family. In terms of assembly, homodimer.

The protein resides in the secreted. The enzyme catalyses Hydrolysis of terminal, non-reducing beta-D-glucosyl residues with release of beta-D-glucose.. In terms of biological role, hydrolyzes glycosides, oligosaccharides and hydrophobic glycosides. Possesses gibberellin ester beta-D-glucosidase activity. Can hydrolyze gibberellin A4 beta-D-glucosyl ester in vitro. The polypeptide is Beta-glucosidase 6 (Oryza sativa subsp. japonica (Rice)).